The primary structure comprises 300 residues: Tubulin polyglutamylase complex subunit 2 (300 aa).

The segment at 257-300 (KIVIPKKKGPVQPAGGQKGPSGPSGPSTSSTSKSSSGSGNPTRK) is disordered. The segment covering 276 to 300 (PSGPSGPSTSSTSKSSSGSGNPTRK) has biased composition (low complexity).

In terms of assembly, part of the neuronal tubulin polyglutamylase complex which contains TPGS1, TPGS2, TTLL1, LRRC49 and NICN1. Interacts with CSTPP1 and LRRC49.

Its subcellular location is the cytoplasm. It is found in the cytoskeleton. It localises to the microtubule organizing center. The protein localises to the centrosome. The protein resides in the centriolar satellite. Its function is as follows. Subunit of the tubulin polyglutamylase complex (TPGC). The complex mediates cilia and flagella polyglutamylation which is essential for their biogenesis and motility. In Homo sapiens (Human), this protein is Tubulin polyglutamylase complex subunit 2 (TPGS2).